We begin with the raw amino-acid sequence, 281 residues long: Protein ZAR1-like 1.L (281 aa).

The segment at 183–267 adopts a 3CxxC-type zinc-finger fold; the sequence is QKYGFFHCKN…QELCGRCKGQ (85 aa).

This sequence belongs to the ZAR1 family. In terms of assembly, component of a cytoplasmic ribonucleoprotein complex together with eif4enif1/4E-T and cpeb1. In terms of tissue distribution, expressed in oocytes.

Its subcellular location is the cytoplasm. The protein resides in the cytoplasmic ribonucleoprotein granule. MRNA-binding protein required for maternal mRNA storage, translation and degradation during oocyte maturation. Controls timing of meiosis during oogenesis. Probably promotes formation of some phase-separated membraneless compartment that stores maternal mRNAs in oocytes: acts by undergoing liquid-liquid phase separation upon binding to maternal mRNAs. Binds to the 3'-UTR of maternal mRNAs, inhibiting their translation. This chain is Protein ZAR1-like 1.L, found in Xenopus laevis (African clawed frog).